The chain runs to 438 residues: Methylenetetrahydrofolate--tRNA-(uracil-5-)-methyltransferase TrmFO (438 aa).

10–15 (GGGLAG) lines the FAD pocket.

This sequence belongs to the MnmG family. TrmFO subfamily. FAD is required as a cofactor.

Its subcellular location is the cytoplasm. It catalyses the reaction uridine(54) in tRNA + (6R)-5,10-methylene-5,6,7,8-tetrahydrofolate + NADH + H(+) = 5-methyluridine(54) in tRNA + (6S)-5,6,7,8-tetrahydrofolate + NAD(+). The catalysed reaction is uridine(54) in tRNA + (6R)-5,10-methylene-5,6,7,8-tetrahydrofolate + NADPH + H(+) = 5-methyluridine(54) in tRNA + (6S)-5,6,7,8-tetrahydrofolate + NADP(+). Functionally, catalyzes the folate-dependent formation of 5-methyl-uridine at position 54 (M-5-U54) in all tRNAs. This Trichormus variabilis (strain ATCC 29413 / PCC 7937) (Anabaena variabilis) protein is Methylenetetrahydrofolate--tRNA-(uracil-5-)-methyltransferase TrmFO.